The primary structure comprises 591 residues: Serine/threonine-protein phosphatase PP2A 65 kDa regulatory subunit (591 aa).

The residue at position 2 (Ala-2) is an N-acetylalanine. HEAT repeat units follow at residues 10-48 (DSLY…GEER), 49-86 (TRSE…GGPE), 87-125 (FAMY…SAQD), 126-163 (LEIH…VTQP), 164-202 (VKAE…ETEY), 203-241 (LKSD…PQDD), 242-280 (VEHL…GPEI), 281-323 (TRVD…QVQI), 324-362 (ILSS…GAYQ), 363-401 (TVEQ…GIQQ), 402-440 (LSQS…GQEF), 441-479 (FDQK…GAPW), 480-518 (AEQA…GTDI), 519-557 (TTKL…EASV), and 558-591 (IDAQ…IAAA).

It belongs to the phosphatase 2A regulatory subunit A family. In terms of assembly, PP2A exists in several trimeric forms, all of which consist of a core composed of a catalytic subunit associated with a 65 kDa regulatory subunit (PR65) (subunit A). The core complex associates with a third, variable subunit (subunit B), which confers distinct properties to the holoenzyme. Interacts with the inorganic phosphate transporter PXo (CG10483). Component of the Integrator-PP2A (INTAC) complex, composed of the Integrator core complex and protein phosphatase 2A subunits mts/PP2A and Pp2A-29B. In terms of tissue distribution, expression varies in tissues throughout development. Highly distributed expression in early embryos. In late embryonal development, found at high levels in nervous system and gonads. In third instar larvae, found in brain, imaginal disks and salivary glands.

It is found in the nucleus. Functionally, the PR65 subunit of protein phosphatase 2A serves as a scaffolding molecule to coordinate the assembly of the catalytic subunit and a variable regulatory B subunit. Key mediator of a quality checkpoint during transcription elongation as part of the Integrator-PP2A (INTAC) complex. The INTAC complex drives premature transcription termination of transcripts that are unfavorably configured for transcriptional elongation: within the INTAC complex, acts as a scaffolding subunit for mts/PP2A, which catalyzes dephosphorylation of the C-terminal domain (CTD) of Pol II subunit POLR2A/RPB1 and Spt5, thereby preventing transcriptional elongation. This is Serine/threonine-protein phosphatase PP2A 65 kDa regulatory subunit (Pp2A-29B) from Drosophila melanogaster (Fruit fly).